We begin with the raw amino-acid sequence, 348 residues long: MRPFRTLVKVLQKIESSPLTKVFMAFIIVVLIGSYLEFLTQRNVKYSEIKNYFTAIWFTMETVTTVGYGDVVPVSNLGRVVAMLIMVSGIGLLGTLTATISAYLFQIRIERRGKLEKRLKNHTIICNWNAYTRNIIEGNRDEEAAPIVILSENTDNSEKYQNVFFVKGDCTSEDDLKNAAIEDAARVVIMSDIENNAIPEDLLDAKTLLSIFTVRKLNNAVEIIAEVRDEKNKKHAVSAGATEVLSVGELSSRLISRSISNPGLTDFILKSLSETEDFKIFSIEACGILPGMTVKDAASNLAEVCVIISVISKGKIEYPPDRSYKIGAGDYVVFLAKNKKEVEEAIKG.

The next 3 helical transmembrane spans lie at 19–39 (LTKV…LEFL), 52–72 (YFTA…GDVV), and 80–100 (VVAM…TATI). One can recognise an RCK N-terminal domain in the interval 120-246 (KNHTIICNWN…VSAGATEVLS (127 aa)). An RCK C-terminal domain is found at 266–348 (DFILKSLSET…KKEVEEAIKG (83 aa)).

Heterooctamer composed of four full-length subunits and four soluble RCK domains.

The protein resides in the cell membrane. Functionally, calcium-gated potassium channel. Can also be activated by Mg(2+), Mn(2+) and Ni(2+). This Thermoplasma volcanium (strain ATCC 51530 / DSM 4299 / JCM 9571 / NBRC 15438 / GSS1) protein is Calcium-gated potassium channel TvoK.